The chain runs to 983 residues: Type IV secretion system protein CagE (983 aa).

Position 597 to 604 (597 to 604) interacts with ATP; it reads GSTGSGKT.

This sequence belongs to the TrbE/VirB4 family. In terms of assembly, component of the Cag type IV secretion system, which is composed of a wheel-shaped outer membrane complex (OMC) and an inner membrane complex (IMC). Interacts with CagV and CagBeta.

The protein resides in the cell inner membrane. The catalysed reaction is ATP + H2O + cellular proteinSide 1 = ADP + phosphate + cellular proteinSide 2.. Functionally, ATPase component of the type IV secretion system Cag (Cag-T4SS). Acts as a molecular motor to provide the energy that is required for the export of proteins. Required for CagA translocation and induction of IL-8 in host gastric epithelial cells. Plays a key role in Cag-T4SS pilus biogenesis, especially in the localization and stabilization of the pilus-associated components CagI, CagL and the surface protein CagH. Is also critical for assembly of the entire cytoplasmic portion of the Cag inner membrane complex (IMC). The protein is Type IV secretion system protein CagE of Helicobacter pylori (strain ATCC 700392 / 26695) (Campylobacter pylori).